Here is a 75-residue protein sequence, read N- to C-terminus: Large ribosomal subunit protein bL31 (75 aa).

Belongs to the bacterial ribosomal protein bL31 family. Type A subfamily. As to quaternary structure, part of the 50S ribosomal subunit.

In terms of biological role, binds the 23S rRNA. This Chlorobaculum tepidum (strain ATCC 49652 / DSM 12025 / NBRC 103806 / TLS) (Chlorobium tepidum) protein is Large ribosomal subunit protein bL31.